Here is a 377-residue protein sequence, read N- to C-terminus: Multiple sugar-binding transport ATP-binding protein MsmK (377 aa).

The 243-residue stretch at 4-246 (LNLNHIYKKY…PANKFVAGFI (243 aa)) folds into the ABC transporter domain. 38–45 (GPSGCGKS) provides a ligand contact to ATP.

It belongs to the ABC transporter superfamily.

It localises to the cell membrane. Involved in a binding protein-dependent transport system responsible for the uptake of melibiose, raffinose and isomaltotriose. Probably responsible for energy coupling to the transport system. This Streptococcus mutans serotype c (strain ATCC 700610 / UA159) protein is Multiple sugar-binding transport ATP-binding protein MsmK (msmK).